The following is a 317-amino-acid chain: MYSKILGTGSYLPAQIRSNADLEKMVDTSDEWILARTGISERRIAGEDESVATMAHLASVNAIEMAGIDKNDIDLIILATSTPTYSFPSAACEVQGLLGIQGCPAFDLSAACSGFVYALSVADQHIKTGMAKNVLVIGSDAVSHTCDPEDRSTIILFGDGAGAVVLGQSEEPGIISTHLHADGKFGELLSLPVPSRKNEEADKWLYMAGNEVFKVAVTQLSNLVKETLQENQMDKSELDWLVPHQANLRIIKATAKKLSMSMDQVVVTLDRHGNTSAATVPTALDEAVRDGRIQRGQTLLLEAFGGGFTWGSALVKF.

Catalysis depends on residues Cys-112 and His-244. The tract at residues 245–249 is ACP-binding; the sequence is QANLR. Asn-274 is a catalytic residue.

This sequence belongs to the thiolase-like superfamily. FabH family. Homodimer.

It localises to the cytoplasm. The catalysed reaction is malonyl-[ACP] + acetyl-CoA + H(+) = 3-oxobutanoyl-[ACP] + CO2 + CoA. It participates in lipid metabolism; fatty acid biosynthesis. In terms of biological role, catalyzes the condensation reaction of fatty acid synthesis by the addition to an acyl acceptor of two carbons from malonyl-ACP. Catalyzes the first condensation reaction which initiates fatty acid synthesis and may therefore play a role in governing the total rate of fatty acid production. Possesses both acetoacetyl-ACP synthase and acetyl transacylase activities. Its substrate specificity determines the biosynthesis of branched-chain and/or straight-chain of fatty acids. The chain is Beta-ketoacyl-[acyl-carrier-protein] synthase III from Aliivibrio fischeri (strain ATCC 700601 / ES114) (Vibrio fischeri).